Consider the following 343-residue polypeptide: Ribosomal RNA small subunit methyltransferase C (343 aa).

The protein belongs to the methyltransferase superfamily. RsmC family. As to quaternary structure, monomer.

It is found in the cytoplasm. It catalyses the reaction guanosine(1207) in 16S rRNA + S-adenosyl-L-methionine = N(2)-methylguanosine(1207) in 16S rRNA + S-adenosyl-L-homocysteine + H(+). Functionally, specifically methylates the guanine in position 1207 of 16S rRNA in the 30S particle. The sequence is that of Ribosomal RNA small subunit methyltransferase C from Escherichia coli (strain K12 / DH10B).